The following is an 87-amino-acid chain: Large ribosomal subunit protein bL27 (87 aa).

Residues 1 to 26 (MAHKKGTGSTRNGRDSNSKRLGVKAY) are disordered.

It belongs to the bacterial ribosomal protein bL27 family.

This chain is Large ribosomal subunit protein bL27, found in Prochlorococcus marinus (strain SARG / CCMP1375 / SS120).